Consider the following 1469-residue polypeptide: Accumulation-associated protein (1469 aa).

Positions 1 to 52 (MGKRRQGPINKKVDFLPNKLNKYSIRKFTVGTASILLGSTLIFGSSSHEAKA) are cleaved as a signal peptide. 3 disordered regions span residues 52–164 (AAEE…SEPV), 486–511 (GIET…TPTT), and 528–1443 (EIKP…QANE). Composition is skewed to polar residues over residues 75 to 94 (ENTN…STLQ) and 110 to 125 (KANS…SEAP). A compositionally biased stretch (basic and acidic residues) spans 129–144 (DLARKEDIPAVSKNEE). Polar residues predominate over residues 145-164 (LQSSQPNTDSKIEPTTSEPV). 7 consecutive G5 domains span residues 446–528 (PKAV…GGEE), 574–656 (YGPV…GGEE), 702–784 (YGPV…GGEE), 830–912 (YGPV…GGEE), 958–1040 (YGPV…GGEE), 1086–1168 (YGPV…GGEQ), and 1211–1296 (VTKY…GPTK). Over residues 489-500 (TTTTPTYVNPNT) the composition is skewed to low complexity. 2 stretches are compositionally biased toward basic and acidic residues: residues 528–537 (EIKPGHKDEF) and 589–613 (PFDK…KGEP). Residues 614–629 (GTKTITTPTTKNPLTG) are compositionally biased toward low complexity. Composition is skewed to basic and acidic residues over residues 631–646 (KVGE…KQPV) and 655–665 (EEIKPGHKDEF). The segment covering 738–757 (KGEPGTKTITTPTTKNPLTG) has biased composition (low complexity). Basic and acidic residues-rich tracts occupy residues 759 to 793 (KVGE…KDEF) and 845 to 869 (PFDK…KGEP). Residues 870–885 (GTKTITTPTTKNPLTG) show a composition bias toward low complexity. Positions 887 to 921 (KVGEGEPTEKVTKQPVDEIVHYGGEEIKPGHKDEF) are enriched in basic and acidic residues. Residues 994-1013 (KGEPGTKTITTPTTKNPLTG) are compositionally biased toward low complexity. The span at 1015–1049 (KVGEGEPTEKITKQPVDEIVHYGGEEIKPGHKDEF) shows a compositional bias: basic and acidic residues. The span at 1122–1141 (KGEPGTKTITTPTTKNPLTG) shows a compositional bias: low complexity. Basic and acidic residues-rich tracts occupy residues 1143–1162 (KVGE…DEIV), 1229–1253 (PFDK…KGEP), and 1271–1286 (KVGE…KQPV). Over residues 1409 to 1443 (TPTQSGAPEQPNRSMHSTDNKNQLPDTGENRQANE) the composition is skewed to polar residues. An LPXTG sorting signal motif is present at residues 1432–1436 (LPDTG). A Pentaglycyl murein peptidoglycan amidated threonine modification is found at Thr1435. Residues 1436–1469 (GENRQANEGTLVGSLLAIVGSLFIFGRRKKGNEK) constitute a propeptide, removed by sortase.

It localises to the secreted. The protein resides in the cell wall. In Staphylococcus epidermidis (strain ATCC 12228 / FDA PCI 1200), this protein is Accumulation-associated protein.